The chain runs to 348 residues: UDP-glucose 4-epimerase (348 aa).

NAD(+) is bound by residues 12 to 14 (GYI), 33 to 37 (DNFHN), 66 to 67 (DI), phenylalanine 88, and lysine 92. 132–134 (SAT) contacts substrate. The active-site Proton acceptor is the tyrosine 157. Positions 161 and 185 each coordinate NAD(+). Substrate is bound by residues 185–187 (YFN), 206–208 (NNL), 224–226 (NVF), arginine 239, and 300–303 (REGD).

This sequence belongs to the NAD(P)-dependent epimerase/dehydratase family. As to quaternary structure, homodimer. Requires NAD(+) as cofactor.

It carries out the reaction UDP-alpha-D-glucose = UDP-alpha-D-galactose. The enzyme catalyses UDP-N-acetyl-alpha-D-glucosamine = UDP-N-acetyl-alpha-D-galactosamine. It functions in the pathway carbohydrate metabolism; galactose metabolism. Its function is as follows. Catalyzes two distinct but analogous reactions: the reversible epimerization of UDP-glucose to UDP-galactose and the reversible epimerization of UDP-N-acetylglucosamine to UDP-N-acetylgalactosamine. The reaction with UDP-Gal plays a critical role in the Leloir pathway of galactose catabolism in which galactose is converted to the glycolytic intermediate glucose 6-phosphate. It contributes to the catabolism of dietary galactose and enables the endogenous biosynthesis of both UDP-Gal and UDP-GalNAc when exogenous sources are limited. Both UDP-sugar interconversions are important in the synthesis of glycoproteins and glycolipids. In Bos taurus (Bovine), this protein is UDP-glucose 4-epimerase.